We begin with the raw amino-acid sequence, 389 residues long: MIVEPKFRGFICTTSHPIGCKKNVENQIEYVKENGKIEGAKRVLVLGASTGYGLASAIVASEACDAEVLGVSFEREAKGKRTASAGWYNIESLKKFVEGEGKKFISVNGDAFSNEVKSEVIDLIKENMGKVDLVIYSLAAPKRKDPVSGEVYSSCLKTVGAPFTSKTLDFHTGEIQDITINPATEEEIEGTRKVMGGEDWMLWIEALKEANVLENGVKTIAYSYIGPEVTYPIYREGTIGRAKNDLEKTAGEITKVLKSLNGEGYISVNKALVTQASSAIPIVSLYISILYKVMKEKGTHEGCIEQIYRMFKELYEGNLNLDSENRIRIDDLEMAEDVQKAIEEIWPQITSENVFELSDAEDFKKEFFKLFGFGLEGVDYSEDVDITTV.

NAD(+)-binding positions include 47 to 52, 73 to 74, 110 to 111, and 138 to 139; these read GASTGY, FE, DA, and LA. Tyr-224 lines the substrate pocket. Tyr-234 functions as the Proton donor in the catalytic mechanism. Residues Lys-243 and 272–274 contribute to the NAD(+) site; that span reads LVT.

It belongs to the TER reductase family. In terms of assembly, monomer.

It catalyses the reaction a 2,3-saturated acyl-CoA + NAD(+) = a (2E)-enoyl-CoA + NADH + H(+). The protein operates within lipid metabolism; fatty acid biosynthesis. In terms of biological role, involved in the fatty acid synthesis (FAS II). Catalyzes the reduction of a carbon-carbon double bond in an enoyl moiety that is covalently linked to a coenzyme A (CoA). The protein is Trans-2-enoyl-CoA reductase [NADH] of Clostridium perfringens (strain SM101 / Type A).